Here is a 61-residue protein sequence, read N- to C-terminus: Alpha-conotoxin CnIJ (61 aa).

The signal sequence occupies residues 1 to 17 (MMFTVFLLVVLTTTVVS). The propeptide occupies 18 to 44 (FPSDSASDGRDDEAKDERSDMYELKRN). 2 disulfides stabilise this stretch: Cys47/Cys52 and Cys48/Cys59. Position 59 is a cysteine amide (Cys59).

Belongs to the conotoxin A superfamily. Expressed by the venom duct.

The protein localises to the secreted. The chain is Alpha-conotoxin CnIJ from Conus consors (Singed cone).